The chain runs to 97 residues: Co-chaperonin GroES (97 aa).

The protein belongs to the GroES chaperonin family. In terms of assembly, heptamer of 7 subunits arranged in a ring. Interacts with the chaperonin GroEL.

It localises to the cytoplasm. Functionally, together with the chaperonin GroEL, plays an essential role in assisting protein folding. The GroEL-GroES system forms a nano-cage that allows encapsulation of the non-native substrate proteins and provides a physical environment optimized to promote and accelerate protein folding. GroES binds to the apical surface of the GroEL ring, thereby capping the opening of the GroEL channel. The polypeptide is Co-chaperonin GroES (Buchnera aphidicola subsp. Pemphigus spyrothecae).